The sequence spans 1755 residues: Deleted in lung and esophageal cancer protein 1 (1755 aa).

A compositionally biased stretch (basic residues) spans 1 to 12 (METRSSKTRRSL). Disordered regions lie at residues 1 to 39 (METR…PSQP), 1339 to 1360 (PGPS…GSSS), and 1529 to 1553 (SQDG…EETA). Residues 30–39 (PAGSSSPSQP) show a composition bias toward low complexity.

Interacts with alpha- and beta-tubulin. Interacts with BBS2, BBS4, BBS5, MKKS, TCP1, CCT2, CCT3, CCT4, CCT5 and CCT7. As to expression, expressed in all tissues examined. Expression is highest in prostate and testis.

It is found in the cytoplasm. In terms of biological role, essential for spermatogenesis and male fertility. May play an important role in sperm head and tail formation. May act as a tumor suppressor by inhibiting cell proliferation. This is Deleted in lung and esophageal cancer protein 1 from Homo sapiens (Human).